A 600-amino-acid polypeptide reads, in one-letter code: Proline--tRNA ligase (600 aa).

The protein belongs to the class-II aminoacyl-tRNA synthetase family. ProS type 1 subfamily. As to quaternary structure, homodimer.

Its subcellular location is the cytoplasm. It catalyses the reaction tRNA(Pro) + L-proline + ATP = L-prolyl-tRNA(Pro) + AMP + diphosphate. Catalyzes the attachment of proline to tRNA(Pro) in a two-step reaction: proline is first activated by ATP to form Pro-AMP and then transferred to the acceptor end of tRNA(Pro). As ProRS can inadvertently accommodate and process non-cognate amino acids such as alanine and cysteine, to avoid such errors it has two additional distinct editing activities against alanine. One activity is designated as 'pretransfer' editing and involves the tRNA(Pro)-independent hydrolysis of activated Ala-AMP. The other activity is designated 'posttransfer' editing and involves deacylation of mischarged Ala-tRNA(Pro). The misacylated Cys-tRNA(Pro) is not edited by ProRS. This is Proline--tRNA ligase from Prochlorococcus marinus (strain MIT 9215).